Reading from the N-terminus, the 157-residue chain is Large ribosomal subunit protein uL15 (157 aa).

Residues 1 to 13 are compositionally biased toward basic and acidic residues; the sequence is MKLNDLRDKDGAT. Positions 1–39 are disordered; sequence MKLNDLRDKDGATHSKKRLGRGIGSGSGKTAGRGVKGQK. A compositionally biased stretch (gly residues) spans 21 to 35; the sequence is RGIGSGSGKTAGRGV.

This sequence belongs to the universal ribosomal protein uL15 family. In terms of assembly, part of the 50S ribosomal subunit.

Functionally, binds to the 23S rRNA. This Mesorhizobium japonicum (strain LMG 29417 / CECT 9101 / MAFF 303099) (Mesorhizobium loti (strain MAFF 303099)) protein is Large ribosomal subunit protein uL15.